Reading from the N-terminus, the 397-residue chain is Succinate--CoA ligase [ADP-forming] subunit beta (397 aa).

The 245-residue stretch at 9–253 (KEILASYGVR…IREENPIEVE (245 aa)) folds into the ATP-grasp domain. Residues K50, 57 to 59 (GRG), V106, and E116 contribute to the ATP site. N208 and D222 together coordinate Mg(2+). Substrate-binding positions include N273 and 330-332 (GIV).

It belongs to the succinate/malate CoA ligase beta subunit family. Heterotetramer of two alpha and two beta subunits. It depends on Mg(2+) as a cofactor.

The catalysed reaction is succinate + ATP + CoA = succinyl-CoA + ADP + phosphate. The enzyme catalyses GTP + succinate + CoA = succinyl-CoA + GDP + phosphate. It functions in the pathway carbohydrate metabolism; tricarboxylic acid cycle; succinate from succinyl-CoA (ligase route): step 1/1. Its function is as follows. Succinyl-CoA synthetase functions in the citric acid cycle (TCA), coupling the hydrolysis of succinyl-CoA to the synthesis of either ATP or GTP and thus represents the only step of substrate-level phosphorylation in the TCA. The beta subunit provides nucleotide specificity of the enzyme and binds the substrate succinate, while the binding sites for coenzyme A and phosphate are found in the alpha subunit. This Flavobacterium johnsoniae (strain ATCC 17061 / DSM 2064 / JCM 8514 / BCRC 14874 / CCUG 350202 / NBRC 14942 / NCIMB 11054 / UW101) (Cytophaga johnsonae) protein is Succinate--CoA ligase [ADP-forming] subunit beta.